A 247-amino-acid polypeptide reads, in one-letter code: Small ribosomal subunit protein uS3 (247 aa).

Residues valine 51–arginine 119 form the KH type-2 domain. The segment covering proline 224–glutamate 233 has biased composition (basic and acidic residues). The disordered stretch occupies residues proline 224–arginine 247.

It belongs to the universal ribosomal protein uS3 family. Part of the 30S ribosomal subunit. Forms a tight complex with proteins S10 and S14.

In terms of biological role, binds the lower part of the 30S subunit head. Binds mRNA in the 70S ribosome, positioning it for translation. This is Small ribosomal subunit protein uS3 from Jannaschia sp. (strain CCS1).